We begin with the raw amino-acid sequence, 460 residues long: MKLWGGRFQKTTDSLVEDFHSSISFDQRLYKQDIRGSIAHATMLGKVGIISLEEAAQIVTGLKQILEEIEAGKVEFDVAAEDIHMNVEQLLTAKIGAVGKKLHTARSRNDQVAVDIRMYLKDEIIEIRALLKELVETLLNLAEQHTNTVMPGYTHMQRAQPITFAHHLMAYSQMFMRDMGRLTDCYKRTDVMPLGSGALAGTTFPLDREYTAELLGFAAVSDNSLDAVSDRDFAVEFCAAASLIMMHLSRFCEEIILWATGEFAFIDLDDAYSTGSSIMPQKKNPDVAELIRGKTGRVYGDLMGLLTMLKGLPMAYNKDMQEDKEALFDAMDTVKGCLMVFRPMLATMTVRQENMAKAARGGFTNATDVADYLAKKGVPFREAHEVVGKAVFYCLQQNKALEELTLEEYKELSPVFEDDIYAAIGVEYCVAARKVRGGPAPEAVQQAITRTKERLKQLGE.

It belongs to the lyase 1 family. Argininosuccinate lyase subfamily.

It is found in the cytoplasm. The catalysed reaction is 2-(N(omega)-L-arginino)succinate = fumarate + L-arginine. Its pathway is amino-acid biosynthesis; L-arginine biosynthesis; L-arginine from L-ornithine and carbamoyl phosphate: step 3/3. This is Argininosuccinate lyase from Desulforamulus reducens (strain ATCC BAA-1160 / DSM 100696 / MI-1) (Desulfotomaculum reducens).